We begin with the raw amino-acid sequence, 55 residues long: Large ribosomal subunit protein bL33A (55 aa).

It belongs to the bacterial ribosomal protein bL33 family.

The sequence is that of Large ribosomal subunit protein bL33A from Mycobacterium sp. (strain JLS).